We begin with the raw amino-acid sequence, 305 residues long: tRNA dimethylallyltransferase (305 aa).

Residue 9–16 coordinates ATP; the sequence is GPTASGKS. Substrate is bound at residue 11 to 16; that stretch reads TASGKS. The interaction with substrate tRNA stretch occupies residues 34 to 37; sequence DSKQ.

The protein belongs to the IPP transferase family. Monomer. Mg(2+) serves as cofactor.

The catalysed reaction is adenosine(37) in tRNA + dimethylallyl diphosphate = N(6)-dimethylallyladenosine(37) in tRNA + diphosphate. Functionally, catalyzes the transfer of a dimethylallyl group onto the adenine at position 37 in tRNAs that read codons beginning with uridine, leading to the formation of N6-(dimethylallyl)adenosine (i(6)A). This Anaplasma marginale (strain Florida) protein is tRNA dimethylallyltransferase.